Consider the following 291-residue polypeptide: Shikimate dehydrogenase (NADP(+)) (291 aa).

Shikimate contacts are provided by residues 23–25 (SFS) and Thr-70. The active-site Proton acceptor is the Lys-74. 2 residues coordinate shikimate: Asn-95 and Asp-110. Residues 135–139 (GAGGA) and Leu-232 contribute to the NADP(+) site. A shikimate-binding site is contributed by Tyr-234. Gly-255 is an NADP(+) binding site.

Belongs to the shikimate dehydrogenase family. Homodimer.

The enzyme catalyses shikimate + NADP(+) = 3-dehydroshikimate + NADPH + H(+). Its pathway is metabolic intermediate biosynthesis; chorismate biosynthesis; chorismate from D-erythrose 4-phosphate and phosphoenolpyruvate: step 4/7. Its function is as follows. Involved in the biosynthesis of the chorismate, which leads to the biosynthesis of aromatic amino acids. Catalyzes the reversible NADPH linked reduction of 3-dehydroshikimate (DHSA) to yield shikimate (SA). This Desulforamulus reducens (strain ATCC BAA-1160 / DSM 100696 / MI-1) (Desulfotomaculum reducens) protein is Shikimate dehydrogenase (NADP(+)).